The following is a 230-amino-acid chain: Ion-translocating oxidoreductase complex subunit E (230 aa).

A run of 6 helical transmembrane segments spans residues Ala-18 to Ala-38, Leu-39 to Leu-59, Thr-63 to Val-83, Leu-86 to Val-106, Ala-128 to Met-148, and Pro-182 to Gly-202.

Belongs to the NqrDE/RnfAE family. The complex is composed of six subunits: RsxA, RsxB, RsxC, RsxD, RsxE and RsxG.

Its subcellular location is the cell inner membrane. In terms of biological role, part of a membrane-bound complex that couples electron transfer with translocation of ions across the membrane. Required to maintain the reduced state of SoxR. This is Ion-translocating oxidoreductase complex subunit E from Escherichia fergusonii (strain ATCC 35469 / DSM 13698 / CCUG 18766 / IAM 14443 / JCM 21226 / LMG 7866 / NBRC 102419 / NCTC 12128 / CDC 0568-73).